A 231-amino-acid chain; its full sequence is MSEIKDVIVQGLWKNNSALVQLLGLCPLLAVTSTATNALGLGLATTLVLTLTNLTISTLRHWTPAEIRIPIYVMIIASVVSAVQMLINAYAFGLYQSLGIFIPLIVTNCIVVGRAEAFAAKKGPALSALDGFSIGMGATCAMFVLGSLREIIGNGTLFDGADALLGSWAKVLRVEIFHTDSPFLLAMLPPGAFIGLGLMLAGKYLIDEKMKKRRTEAVAERALPNGETGNV.

Helical transmembrane passes span 18 to 38 (ALVQ…ATNA), 39 to 59 (LGLG…ISTL), 63 to 83 (TPAE…VSAV), 86 to 106 (LINA…PLIV), 125 to 145 (ALSA…MFVL), and 182 to 202 (PFLL…MLAG).

Belongs to the NqrDE/RnfAE family. As to quaternary structure, the complex is composed of six subunits: RsxA, RsxB, RsxC, RsxD, RsxE and RsxG.

It localises to the cell inner membrane. Its function is as follows. Part of a membrane-bound complex that couples electron transfer with translocation of ions across the membrane. Required to maintain the reduced state of SoxR. The protein is Ion-translocating oxidoreductase complex subunit E of Escherichia coli O6:H1 (strain CFT073 / ATCC 700928 / UPEC).